The primary structure comprises 211 residues: Large ribosomal subunit protein uL3 (211 aa).

Glutamine 150 carries the N5-methylglutamine modification.

This sequence belongs to the universal ribosomal protein uL3 family. Part of the 50S ribosomal subunit. Forms a cluster with proteins L14 and L19. In terms of processing, methylated by PrmB.

Its function is as follows. One of the primary rRNA binding proteins, it binds directly near the 3'-end of the 23S rRNA, where it nucleates assembly of the 50S subunit. This Pseudomonas syringae pv. syringae (strain B728a) protein is Large ribosomal subunit protein uL3.